The chain runs to 623 residues: Lethal(3)malignant brain tumor-like protein 4 (623 aa).

A disordered region spans residues 1 to 44 (MKQPNRKRKLNMDSKERLDQDGRLEQAEEEKKPKDSTTPLSHVP). Residues 10–35 (LNMDSKERLDQDGRLEQAEEEKKPKD) show a composition bias toward basic and acidic residues. MBT repeat units follow at residues 52–152 (WSWE…LHIP), 160–260 (FVWM…LIAP), and 269–364 (FSWT…LEVP). The CCHHC-type zinc-finger motif lies at 370–414 (LKILPGQAVCPTPGCRGIGHIRGPRYSGHHSAFGCPYSDMNLKKE). Zn(2+)-binding residues include cysteine 379, cysteine 384, histidine 398, and cysteine 404. The SAM domain maps to 543 to 607 (WTVDEVAEFV…YNSILMFRHS (65 aa)).

The protein resides in the nucleus. Functionally, putative Polycomb group (PcG) protein. PcG proteins maintain the transcriptionally repressive state of genes, probably via a modification of chromatin, rendering it heritably changed in its expressibility. The sequence is that of Lethal(3)malignant brain tumor-like protein 4 (L3MBTL4) from Homo sapiens (Human).